Reading from the N-terminus, the 278-residue chain is tRNA (guanine-N(7)-)-methyltransferase (278 aa).

S-adenosyl-L-methionine contacts are provided by residues glycine 95, 118-119 (EI), 153-154 (NA), and cysteine 173. Aspartate 176 is a catalytic residue. 251 to 253 (TEE) provides a ligand contact to S-adenosyl-L-methionine.

Belongs to the class I-like SAM-binding methyltransferase superfamily. TrmB family. As to quaternary structure, forms a complex with TRM82.

It is found in the nucleus. It carries out the reaction guanosine(46) in tRNA + S-adenosyl-L-methionine = N(7)-methylguanosine(46) in tRNA + S-adenosyl-L-homocysteine. It functions in the pathway tRNA modification; N(7)-methylguanine-tRNA biosynthesis. Its function is as follows. Catalyzes the formation of N(7)-methylguanine at position 46 (m7G46) in tRNA. The chain is tRNA (guanine-N(7)-)-methyltransferase from Kluyveromyces lactis (strain ATCC 8585 / CBS 2359 / DSM 70799 / NBRC 1267 / NRRL Y-1140 / WM37) (Yeast).